A 127-amino-acid chain; its full sequence is Ycf91-like protein (127 aa).

It belongs to the ycf91 family.

In Nostoc sp. (strain PCC 7120 / SAG 25.82 / UTEX 2576), this protein is Ycf91-like protein.